Consider the following 221-residue polypeptide: Uracil-DNA glycosylase (221 aa).

Aspartate 63 functions as the Proton acceptor in the catalytic mechanism.

It belongs to the uracil-DNA glycosylase (UDG) superfamily. UNG family.

The protein localises to the cytoplasm. It carries out the reaction Hydrolyzes single-stranded DNA or mismatched double-stranded DNA and polynucleotides, releasing free uracil.. Functionally, excises uracil residues from the DNA which can arise as a result of misincorporation of dUMP residues by DNA polymerase or due to deamination of cytosine. The protein is Uracil-DNA glycosylase of Blochmanniella floridana.